The chain runs to 343 residues: MAAVVPVTVELGFVEEAPAWRLRSEQFPSKVGGRPAWLALAELPGPGALACARCGRPLAFLLQVYAPLPGRDEAFHRSLFLFCCREPLCCAGLRVFRNQLPRKNAFYSYEPPSETGASDTECVCLQLKSGAHLCRVCGCLAPMTCSRCKQAHYCSKEHQTLDWQLGHKQACTQSDHLDHMVPDHNFLFPEFEIVTETEDEIGPEVVEMEDYSEVIGSMEGVPEEELDSMAKHESKEDHIFQKFKSKIALEPEQILRYGRGIKPIWISGENIPQEKDIPDCSCGAKRIFEFQVMPQLLNHLKADRLGTSVDWGILAVFTCAESCSLGIGYTEEFVWKQDVTETP.

Zn(2+)-binding residues include Cys-134, Cys-137, Cys-145, Cys-148, Cys-154, His-158, His-167, and Cys-171. Residues 134–171 (CRVCGCLAPMTCSRCKQAHYCSKEHQTLDWQLGHKQAC) form an MYND-type; atypical zinc finger.

Post-translationally, ubiquitinated by PRKN, promoting proteasomal degradation.

The protein resides in the nucleus. May be a DNA-binding protein with a regulatory function. May play an important role in cell death and/or in regulation of cell proliferation. The chain is Programmed cell death protein 2 (Pdcd2) from Rattus norvegicus (Rat).